Here is a 355-residue protein sequence, read N- to C-terminus: Tabersonine 16-O-methyltransferase (355 aa).

S-adenosyl-L-methionine is bound by residues 198 to 201, Asp-222, 222 to 223, 242 to 243, and Lys-256; these read IGGG, DL, and DM. The active-site Proton acceptor is His-260.

It belongs to the class I-like SAM-binding methyltransferase superfamily. Cation-independent O-methyltransferase family. COMT subfamily. Homodimer. In terms of tissue distribution, expressed in leaves and flowers. Detected in stems and roots. In leaves, expressed in epidermal cells.

Its subcellular location is the cytoplasm. It carries out the reaction 16-hydroxytabersonine + S-adenosyl-L-methionine = 16-methoxytabersonine + S-adenosyl-L-homocysteine + H(+). Its pathway is alkaloid biosynthesis; vindoline biosynthesis. Functionally, 16-O-methyltransferase involved in the biosynthesis of vindoline. Highly specific for 16-hydroxytabersonine. No activity with tabersonine, 3-hydroxytyramine, 4-hydroxytyramine, 5-hydroxytryptamine (5HT), 2,3-dihydro-3-hydroxytabersonine, lochnericine, hoerhammericine, 16-hydroxy-2,3-dihydro-3-hydroxytabersonine, 16-hydroxylochnericine, 16-hydroxyhoerhammericine, quercetin, kaempferol and caffeic acid as substrates. This is Tabersonine 16-O-methyltransferase from Catharanthus roseus (Madagascar periwinkle).